We begin with the raw amino-acid sequence, 284 residues long: MEMO1 family protein MmarC5_0191 (284 aa).

It belongs to the MEMO1 family.

The sequence is that of MEMO1 family protein MmarC5_0191 from Methanococcus maripaludis (strain C5 / ATCC BAA-1333).